The following is an 857-amino-acid chain: Zinc finger protein 574 (857 aa).

14 consecutive C2H2-type zinc fingers follow at residues 15–37 (YVCS…QQSH), 58–80 (YQCL…QELH), 99–121 (YECP…RYTH), 206–228 (YKCS…QGTH), 297–319 (FSCG…QISH), 324–346 (FSCP…LKSH), 352–374 (YLCV…RRSH), 380–401 (FTCE…RRVH), 428–451 (FHCD…RFVH), 457–479 (HKCP…MLTH), 485–507 (YSCT…RLTH), 513–535 (YKCQ…QYVH), 541–563 (YKCN…QYHH), and 569–591 (YKCQ…QLGH). Residues 597-619 (HRCRECGTNFPSVQRLQDHRCSK) form a C2H2-type 15; degenerate zinc finger. 5 consecutive C2H2-type zinc fingers follow at residues 628 to 651 (LECP…AAQH), 681 to 703 (LECS…RRIH), 709 to 731 (YPCP…RRLH), 737 to 759 (FKCD…KRIH), and 765 to 787 (HSCP…RKLH). The segment at 648-678 (AAQHSGNKRSNVSSGKGTPVLPRNKLKGGGG) is disordered. Over residues 651-663 (HSGNKRSNVSSGK) the composition is skewed to polar residues.

The protein belongs to the krueppel C2H2-type zinc-finger protein family.

It localises to the nucleus. In terms of biological role, may be involved in transcriptional regulation. The protein is Zinc finger protein 574 (znf574) of Xenopus tropicalis (Western clawed frog).